The sequence spans 94 residues: Co-chaperonin GroES (94 aa).

The protein belongs to the GroES chaperonin family. Heptamer of 7 subunits arranged in a ring. Interacts with the chaperonin GroEL.

The protein localises to the cytoplasm. Its function is as follows. Together with the chaperonin GroEL, plays an essential role in assisting protein folding. The GroEL-GroES system forms a nano-cage that allows encapsulation of the non-native substrate proteins and provides a physical environment optimized to promote and accelerate protein folding. GroES binds to the apical surface of the GroEL ring, thereby capping the opening of the GroEL channel. The chain is Co-chaperonin GroES from Listeria welshimeri serovar 6b (strain ATCC 35897 / DSM 20650 / CCUG 15529 / CIP 8149 / NCTC 11857 / SLCC 5334 / V8).